A 314-amino-acid polypeptide reads, in one-letter code: Methionyl-tRNA formyltransferase (314 aa).

(6S)-5,6,7,8-tetrahydrofolate is bound at residue serine 110–proline 113.

Belongs to the Fmt family.

The enzyme catalyses L-methionyl-tRNA(fMet) + (6R)-10-formyltetrahydrofolate = N-formyl-L-methionyl-tRNA(fMet) + (6S)-5,6,7,8-tetrahydrofolate + H(+). Functionally, attaches a formyl group to the free amino group of methionyl-tRNA(fMet). The formyl group appears to play a dual role in the initiator identity of N-formylmethionyl-tRNA by promoting its recognition by IF2 and preventing the misappropriation of this tRNA by the elongation apparatus. The sequence is that of Methionyl-tRNA formyltransferase from Bacillus cereus (strain B4264).